The chain runs to 242 residues: Small ribosomal subunit protein uS7m (242 aa).

The N-terminal 37 residues, 1 to 37 (MAAPTAKVSRGWSGLALGVRIAVLRLPGLTQVRWSRY), are a transit peptide targeting the mitochondrion. N6-acetyllysine is present on K228.

This sequence belongs to the universal ribosomal protein uS7 family. As to quaternary structure, component of the mitochondrial ribosome small subunit (28S) which comprises a 12S rRNA and about 30 distinct proteins.

Its subcellular location is the mitochondrion. In Bos taurus (Bovine), this protein is Small ribosomal subunit protein uS7m (MRPS7).